The chain runs to 305 residues: Transmembrane epididymal protein 1 (305 aa).

Residues 4–24 (FIGHISPGLFLVFYGLYQAII) traverse the membrane as a helical segment. Asn32 is a glycosylation site (N-linked (GlcNAc...) asparagine). The next 6 helical transmembrane spans lie at 51–71 (LWQIAHAGWLKVVSGSLLIVY), 100–120 (LTMFILLTLDGCVEVVSRSVL), 124–144 (LVLLERGATVLGVYVLLLLLV), 159–179 (SLLILVVFLLMLVLTAELWAP), 187–207 (IETFLFLTMGSWLMQAAFILF), and 223–243 (IMLVTTFFCWHVMINALCMLG). The segment at 285–305 (EQQDRDDQAPLLSKSSPCDRA) is disordered.

It belongs to the TMEM45 family.

The protein resides in the membrane. The protein is Transmembrane epididymal protein 1 (Teddm1) of Rattus norvegicus (Rat).